Here is a 197-residue protein sequence, read N- to C-terminus: Carnitine operon protein CaiE (197 aa).

It belongs to the transferase hexapeptide repeat family.

The protein operates within amine and polyamine metabolism; carnitine metabolism. Its function is as follows. Overproduction of CaiE stimulates the activity of CaiB and CaiD. This is Carnitine operon protein CaiE from Citrobacter koseri (strain ATCC BAA-895 / CDC 4225-83 / SGSC4696).